The chain runs to 395 residues: Cytochrome b561 and DOMON domain-containing protein At5g47530 (395 aa).

The signal sequence occupies residues 1–24 (MAISSNLLLCLSLFIFIITKSALA). Residues 47–162 (LDSFLHYTYD…GIINTVWQDG (116 aa)) enclose the DOMON domain. Residues 176–371 (GNNVRSVSTL…LEGFTWYVVI (196 aa)) enclose the Cytochrome b561 domain. 2 helical membrane-spanning segments follow: residues 210–230 (IHGILNGVSWGIMMPIGAIIA) and 242–262 (AWFYLHVFCQSSAYIIGVAGW). The heme b site is built by His-211, His-247, and His-280. Residues 282–302 (AVGIALFCLATIQVFAMFLRP) form a helical membrane-spanning segment. A heme b-binding site is contributed by His-316. The next 2 helical transmembrane spans lie at 318-338 (TVGYSVIILAVVNVFKGLDIL) and 351-371 (IIVVLGIVAVVLEGFTWYVVI).

Heme b serves as cofactor.

It is found in the membrane. In terms of biological role, may act as a catecholamine-responsive trans-membrane electron transporter. The chain is Cytochrome b561 and DOMON domain-containing protein At5g47530 from Arabidopsis thaliana (Mouse-ear cress).